The sequence spans 173 residues: MIEFLRRIAAHRLAWSLLAASALFLELSALFFQHVLGLHPCVMCVYERIATLGVLTAGLLGMVAPQKWYVRWSALLLWGSSAFWGLKLALKHVDYQVNPSPFNVCEGFVDFPSWAPLDQWIPWMFYPDGDCSEVTWQFLSFSMPQWLVAIFAVYLLVFVVVAIGNLVKGRCCS.

At 1–14 the chain is on the cytoplasmic side; it reads MIEFLRRIAAHRLA. The helical transmembrane segment at 15–31 threads the bilayer; it reads WSLLAASALFLELSALF. The Periplasmic segment spans residues 32 to 49; the sequence is FQHVLGLHPCVMCVYERI. A disulfide bridge connects residues Cys-41 and Cys-44. A helical transmembrane segment spans residues 50-65; sequence ATLGVLTAGLLGMVAP. Residues 66–72 are Cytoplasmic-facing; it reads QKWYVRW. The chain crosses the membrane as a helical span at residues 73–90; it reads SALLLWGSSAFWGLKLAL. At 91 to 145 the chain is on the periplasmic side; the sequence is KHVDYQVNPSPFNVCEGFVDFPSWAPLDQWIPWMFYPDGDCSEVTWQFLSFSMPQ. Cysteines 105 and 131 form a disulfide. The helical transmembrane segment at 146-164 threads the bilayer; sequence WLVAIFAVYLLVFVVVAIG. Residues 165–173 lie on the Cytoplasmic side of the membrane; that stretch reads NLVKGRCCS.

Belongs to the DsbB family.

It is found in the cell inner membrane. Required for disulfide bond formation in some periplasmic proteins. Acts by oxidizing the DsbA protein. The protein is Disulfide bond formation protein B of Aeromonas hydrophila subsp. hydrophila (strain ATCC 7966 / DSM 30187 / BCRC 13018 / CCUG 14551 / JCM 1027 / KCTC 2358 / NCIMB 9240 / NCTC 8049).